The chain runs to 103 residues: Large ribosomal subunit protein bL21 (103 aa).

Belongs to the bacterial ribosomal protein bL21 family. Part of the 50S ribosomal subunit. Contacts protein L20.

Its function is as follows. This protein binds to 23S rRNA in the presence of protein L20. In Shigella sonnei (strain Ss046), this protein is Large ribosomal subunit protein bL21.